Consider the following 296-residue polypeptide: uncharacterized protein (296 aa).

Residues 1-20 (MKKALGILAILLILVGGYFA) form the signal peptide.

This is an uncharacterized protein from Aquifex aeolicus (strain VF5).